The following is a 58-amino-acid chain: UPF0337 protein SAV_738 (58 aa).

Residues 1 to 58 form a disordered region; sequence MAADEKAQANGEQAKGKVKKVVGGAAGNESLKGKGHAEESKGDLRAAKEKAKDAIKRK. A compositionally biased stretch (basic and acidic residues) spans 31–58; the sequence is LKGKGHAEESKGDLRAAKEKAKDAIKRK.

The protein belongs to the UPF0337 (CsbD) family.

This Streptomyces avermitilis (strain ATCC 31267 / DSM 46492 / JCM 5070 / NBRC 14893 / NCIMB 12804 / NRRL 8165 / MA-4680) protein is UPF0337 protein SAV_738.